A 212-amino-acid chain; its full sequence is MNSIDKTQRITQSDALPGRSTPMPVARLHVVHEHSMTHVPDHMSVAIFAMGCFWGAERLFWQQPGIYSTAAGYIGGYTPNPTYREVCSGQTDHAEAVRVVFDPATISYSQLLQLFWENHDPAQGMRQGGDIGSQYRSAIYTLTPEQEQAAQASLQRFQQAMRENSDGRAISTEIEPAGPFYYAEEDHQQYLHKNPNGYCGLGGIGVCLPPPR.

Residues Met-1 to Asp-14 show a composition bias toward polar residues. Residues Met-1 to Thr-21 form a disordered region. Residue Cys-52 is part of the active site.

Belongs to the MsrA Met sulfoxide reductase family.

It carries out the reaction L-methionyl-[protein] + [thioredoxin]-disulfide + H2O = L-methionyl-(S)-S-oxide-[protein] + [thioredoxin]-dithiol. It catalyses the reaction [thioredoxin]-disulfide + L-methionine + H2O = L-methionine (S)-S-oxide + [thioredoxin]-dithiol. Functionally, has an important function as a repair enzyme for proteins that have been inactivated by oxidation. Catalyzes the reversible oxidation-reduction of methionine sulfoxide in proteins to methionine. The protein is Peptide methionine sulfoxide reductase MsrA of Pectobacterium atrosepticum (strain SCRI 1043 / ATCC BAA-672) (Erwinia carotovora subsp. atroseptica).